The sequence spans 344 residues: Phenylalanine--tRNA ligase alpha subunit (344 aa).

E256 serves as a coordination point for Mg(2+).

The protein belongs to the class-II aminoacyl-tRNA synthetase family. Phe-tRNA synthetase alpha subunit type 1 subfamily. As to quaternary structure, tetramer of two alpha and two beta subunits. Mg(2+) is required as a cofactor.

The protein resides in the cytoplasm. It catalyses the reaction tRNA(Phe) + L-phenylalanine + ATP = L-phenylalanyl-tRNA(Phe) + AMP + diphosphate + H(+). This chain is Phenylalanine--tRNA ligase alpha subunit, found in Bacillus cytotoxicus (strain DSM 22905 / CIP 110041 / 391-98 / NVH 391-98).